The primary structure comprises 535 residues: CTP synthase (535 aa).

The interval 1-267 is amidoligase domain; sequence MTKYIFVTGG…DKLVCDHMKL (267 aa). Serine 13 serves as a coordination point for CTP. Serine 13 lines the UTP pocket. Position 14 to 19 (14 to 19) interacts with ATP; sequence SLGKGI. Tyrosine 54 is a binding site for L-glutamine. Aspartate 71 provides a ligand contact to ATP. Residues aspartate 71 and glutamate 141 each contribute to the Mg(2+) site. CTP contacts are provided by residues 148-150, 188-193, and lysine 224; these read DIE and KTKPTQ. UTP contacts are provided by residues 188–193 and lysine 224; that span reads KTKPTQ. In terms of domain architecture, Glutamine amidotransferase type-1 spans 292–534; the sequence is TISLVGKYVE…IGASVQAAEQ (243 aa). Glycine 354 serves as a coordination point for L-glutamine. Cysteine 381 functions as the Nucleophile; for glutamine hydrolysis in the catalytic mechanism. L-glutamine is bound by residues 382–385, glutamate 405, and arginine 462; that span reads LGMQ. Residues histidine 507 and glutamate 509 contribute to the active site.

Belongs to the CTP synthase family. As to quaternary structure, homotetramer.

It catalyses the reaction UTP + L-glutamine + ATP + H2O = CTP + L-glutamate + ADP + phosphate + 2 H(+). The catalysed reaction is L-glutamine + H2O = L-glutamate + NH4(+). It carries out the reaction UTP + NH4(+) + ATP = CTP + ADP + phosphate + 2 H(+). Its pathway is pyrimidine metabolism; CTP biosynthesis via de novo pathway; CTP from UDP: step 2/2. With respect to regulation, allosterically activated by GTP, when glutamine is the substrate; GTP has no effect on the reaction when ammonia is the substrate. The allosteric effector GTP functions by stabilizing the protein conformation that binds the tetrahedral intermediate(s) formed during glutamine hydrolysis. Inhibited by the product CTP, via allosteric rather than competitive inhibition. Functionally, catalyzes the ATP-dependent amination of UTP to CTP with either L-glutamine or ammonia as the source of nitrogen. Regulates intracellular CTP levels through interactions with the four ribonucleotide triphosphates. This Bacillus velezensis (strain DSM 23117 / BGSC 10A6 / LMG 26770 / FZB42) (Bacillus amyloliquefaciens subsp. plantarum) protein is CTP synthase.